The following is a 137-amino-acid chain: Small heat shock protein IbpA (137 aa).

Positions 28–137 constitute a sHSP domain; the sequence is NQSNGGYPPY…SLKPRRIEIK (110 aa).

This sequence belongs to the small heat shock protein (HSP20) family. Monomer. Forms homomultimers of about 100-150 subunits at optimal growth temperatures. Conformation changes to monomers at high temperatures or high ionic concentrations.

The protein resides in the cytoplasm. Its function is as follows. Associates with aggregated proteins, together with IbpB, to stabilize and protect them from irreversible denaturation and extensive proteolysis during heat shock and oxidative stress. Aggregated proteins bound to the IbpAB complex are more efficiently refolded and reactivated by the ATP-dependent chaperone systems ClpB and DnaK/DnaJ/GrpE. Its activity is ATP-independent. This Yersinia pseudotuberculosis serotype O:1b (strain IP 31758) protein is Small heat shock protein IbpA.